Consider the following 314-residue polypeptide: Aromatic prenyltransferase (314 aa).

It belongs to the aromatic prenyltransferase family.

Prenyltransferase that attaches isoprenoid moieties to carbon atoms of aromatic substrates in an enzyme-catalyzed Friedel-Crafts reaction. The protein is Aromatic prenyltransferase of Arthroderma otae (strain ATCC MYA-4605 / CBS 113480) (Microsporum canis).